We begin with the raw amino-acid sequence, 1601 residues long: Ras guanine nucleotide exchange factor glfB (1601 aa).

Disordered regions lie at residues 43-140 (PLLA…KEWD), 188-256 (DLLI…TTTT), 310-461 (SPQR…APDS), and 475-630 (LTTT…VKKG). Residues 45 to 55 (LAPPAPPPPPT) are compositionally biased toward pro residues. The span at 57-69 (QEINIGSGNSTFI) shows a compositional bias: polar residues. The span at 70 to 126 (SSNNNNSNNNNNNNSNNNNNNNLNNSNNNNNNLNSNNNNNNNNNNNNNNGNNNNNSN) shows a compositional bias: low complexity. Serine 197 carries the post-translational modification Phosphoserine. The residue at position 201 (threonine 201) is a Phosphothreonine. 2 stretches are compositionally biased toward low complexity: residues 211–256 (QQQQ…TTTT) and 310–330 (SPQRVTTTTTTTTPSTGGVVV). Residues 331-359 (ADEESDSSEEESDSSEEESDEYTDEESET) show a composition bias toward acidic residues. The segment covering 384-398 (PLTSVNSNDNTSSGT) has biased composition (polar residues). 3 stretches are compositionally biased toward low complexity: residues 435 to 458 (TAVAASSISATTNVTSAASTTTVA), 475 to 493 (LTTTTSATSSTTSATTQSI), and 500 to 520 (SQQRAAQSISTSSVTPAAITK). Positions 521–533 (PTKDAKDKKDPAK) are enriched in basic and acidic residues. A compositionally biased stretch (low complexity) spans 558-577 (VPTGTSPPVSSSTSISSSTG). Residues 578-596 (IKKDKVKLSKEEKDRIKKE) are compositionally biased toward basic and acidic residues. The Rho-GAP domain maps to 649 to 836 (VRLTQLVLSN…LIIDNYVFLF (188 aa)). Residues 851 to 983 (GKMIISEGSI…TINDFLKLPK (133 aa)) form the N-terminal Ras-GEF domain. In terms of domain architecture, Ras-GEF spans 1021 to 1255 (SAMEIAEQCT…ADLSLKCEPP (235 aa)). The segment at 1262–1601 (YNAPADIVDE…QESVPSTNAE (340 aa)) is N-terminal F-actin-binding domain. A disordered region spans residues 1443-1474 (SNVEKEKLSSSQEQQEQQEQKQQEQQQQQQEP). Over residues 1465–1474 (QEQQQQQQEP) the composition is skewed to low complexity.

As to quaternary structure, interacts with gpaB and rapA. Interacts directly with F-actin. Post-translationally, simultaneously phosphorylated at Ser-197 and Thr-201 after cAMP stimulation.

Its subcellular location is the cytoplasm. It is found in the cell cortex. The protein localises to the cytoskeleton. The protein resides in the cell projection. It localises to the filopodium. Its subcellular location is the lamellipodium. GpaB-activated, rapA-specific guanine nucleotide exchange factor, involved in the regulation of the balance between Ras and Rap signaling at the leading edge of chemotaxing cells. Spatially localized activation of Rap and Ras induces F-actin polymerization at the leading edge of chemotaxing cells through the Rac, PI3K, and TORC2 pathways. Also acts as a key regulator of actin-driven membrane protrusions during processes such as phagocytosis and cytokinesis, possibly by modulating rapA signaling pathways. The chain is Ras guanine nucleotide exchange factor glfB from Dictyostelium discoideum (Social amoeba).